A 369-amino-acid polypeptide reads, in one-letter code: UDP-3-O-acylglucosamine N-acyltransferase (369 aa).

His252 acts as the Proton acceptor in catalysis. The interval 348 to 369 (ERRQRGENNAPAQNKQDEEKSS) is disordered.

The protein belongs to the transferase hexapeptide repeat family. LpxD subfamily. As to quaternary structure, homotrimer.

The enzyme catalyses a UDP-3-O-[(3R)-3-hydroxyacyl]-alpha-D-glucosamine + a (3R)-hydroxyacyl-[ACP] = a UDP-2-N,3-O-bis[(3R)-3-hydroxyacyl]-alpha-D-glucosamine + holo-[ACP] + H(+). The protein operates within bacterial outer membrane biogenesis; LPS lipid A biosynthesis. Its function is as follows. Catalyzes the N-acylation of UDP-3-O-acylglucosamine using 3-hydroxyacyl-ACP as the acyl donor. Is involved in the biosynthesis of lipid A, a phosphorylated glycolipid that anchors the lipopolysaccharide to the outer membrane of the cell. The protein is UDP-3-O-acylglucosamine N-acyltransferase of Cupriavidus metallidurans (strain ATCC 43123 / DSM 2839 / NBRC 102507 / CH34) (Ralstonia metallidurans).